A 505-amino-acid chain; its full sequence is Aspartyl/glutamyl-tRNA(Asn/Gln) amidotransferase subunit B (505 aa).

It belongs to the GatB/GatE family. GatB subfamily. In terms of assembly, heterotrimer of A, B and C subunits.

The enzyme catalyses L-glutamyl-tRNA(Gln) + L-glutamine + ATP + H2O = L-glutaminyl-tRNA(Gln) + L-glutamate + ADP + phosphate + H(+). It carries out the reaction L-aspartyl-tRNA(Asn) + L-glutamine + ATP + H2O = L-asparaginyl-tRNA(Asn) + L-glutamate + ADP + phosphate + 2 H(+). Allows the formation of correctly charged Asn-tRNA(Asn) or Gln-tRNA(Gln) through the transamidation of misacylated Asp-tRNA(Asn) or Glu-tRNA(Gln) in organisms which lack either or both of asparaginyl-tRNA or glutaminyl-tRNA synthetases. The reaction takes place in the presence of glutamine and ATP through an activated phospho-Asp-tRNA(Asn) or phospho-Glu-tRNA(Gln). This chain is Aspartyl/glutamyl-tRNA(Asn/Gln) amidotransferase subunit B, found in Kineococcus radiotolerans (strain ATCC BAA-149 / DSM 14245 / SRS30216).